The sequence spans 260 residues: 3'-5' ssDNA/RNA exonuclease TatD (260 aa).

Residues Glu92, His128, and His153 each contribute to the a divalent metal cation site.

It belongs to the metallo-dependent hydrolases superfamily. TatD-type hydrolase family. TatD subfamily. In terms of assembly, monomer. It depends on Mg(2+) as a cofactor.

The protein resides in the cytoplasm. 3'-5' exonuclease that prefers single-stranded DNA and RNA. May play a role in the H(2)O(2)-induced DNA damage repair. In Pectobacterium parmentieri (strain WPP163) (Pectobacterium wasabiae (strain WPP163)), this protein is 3'-5' ssDNA/RNA exonuclease TatD.